Consider the following 443-residue polypeptide: Probable serine transporter (443 aa).

The Cytoplasmic portion of the chain corresponds to 1–48 (MEIASNKGVIADASTPAGRAGMSESEWREAIKFDSTDTGWVIMSIGMA). Residues 49 to 69 (IGAGIVFLPVQVGLMGLWVFL) form a helical membrane-spanning segment. Over 70 to 110 (LSSVIGYPAMYLFQRLFINTLAESPECKDYPSVISGYLGKN) the chain is Periplasmic. The helical transmembrane segment at 111–131 (WGILLGALYFVMLVIWMFVYS) threads the bilayer. Residues 132 to 149 (TAITNDSASYLHTFGVTE) are Cytoplasmic-facing. The helical transmembrane segment at 150–170 (GLLSDSPFYGLVLICILVAIS) threads the bilayer. Topologically, residues 171-182 (SRGEKLLFKIST) are periplasmic. Residues 183 to 203 (GMVLTKLLVVAALGVSMVGMW) traverse the membrane as a helical segment. Residues 204–214 (HLYNVGSLPPL) lie on the Cytoplasmic side of the membrane. A helical membrane pass occupies residues 215 to 235 (GLLVKNAIITLPFTLTSILFI). At 236–264 (QTLSPMVISYRSREKSIEVARHKALRAMN) the chain is on the periplasmic side. A helical transmembrane segment spans residues 265-285 (IAFGILFVTVFFYAVSFTLAM). The Cytoplasmic segment spans residues 286-297 (GHDEAVKAYEQN). A run of 2 helical transmembrane segments spans residues 298-318 (ISAL…WVKV) and 319-339 (VSVI…YLGF). Residues 340–367 (REATQGIVMNILRRKMPAEKINENLVQR) lie on the Cytoplasmic side of the membrane. A helical membrane pass occupies residues 368–388 (GIMIFAILLAWSAIVLNAPVL). Ser389 is a topological domain (periplasmic). Residues 390-410 (FTSICSPIFGMVGCLIPAWLV) form a helical membrane-spanning segment. Residues 411-421 (YKVPALHKYKG) are Cytoplasmic-facing. The helical transmembrane segment at 422 to 442 (MSLYLIIVTGLLLCVSPFLAF) threads the bilayer. A topological domain (periplasmic) is located at residue Ser443.

Belongs to the amino acid/polyamine transporter 2 family. SdaC/TdcC subfamily.

It localises to the cell inner membrane. Plays a role in L-cysteine detoxification. May transport both D- and L-serine. The chain is Probable serine transporter (dlsT) from Escherichia coli (strain K12).